We begin with the raw amino-acid sequence, 538 residues long: Nicotinate phosphoribosyltransferase (538 aa).

Nicotinate-binding residues include Y21 and T210. H213 is modified (phosphohistidine). Position 318 (R318) interacts with nicotinate. A 5-phospho-alpha-D-ribose 1-diphosphate-binding site is contributed by T380.

Belongs to the NAPRTase family. In terms of assembly, homodimer. Requires Mg(2+) as cofactor. Mn(2+) serves as cofactor. Transiently phosphorylated on a His residue during the reaction cycle. Phosphorylation strongly increases the affinity for substrates and increases the rate of nicotinate D-ribonucleotide production. Dephosphorylation regenerates the low-affinity form of the enzyme, leading to product release. Abundantly expressed in the small intestine, liver and kidney.

The protein resides in the cytoplasm. It localises to the cytosol. It catalyses the reaction nicotinate + 5-phospho-alpha-D-ribose 1-diphosphate + ATP + H2O = nicotinate beta-D-ribonucleotide + ADP + phosphate + diphosphate. It functions in the pathway cofactor biosynthesis; NAD(+) biosynthesis; nicotinate D-ribonucleotide from nicotinate: step 1/1. Catalyzes the first step in the biosynthesis of NAD from nicotinic acid, the ATP-dependent synthesis of beta-nicotinate D-ribonucleotide from nicotinate and 5-phospho-D-ribose 1-phosphate. Helps prevent cellular oxidative stress via its role in NAD biosynthesis. The chain is Nicotinate phosphoribosyltransferase (Naprt) from Mus musculus (Mouse).